The primary structure comprises 298 residues: Acetylglutamate kinase (298 aa).

Substrate-binding positions include 69–70 (GG), Arg91, and Asn191.

This sequence belongs to the acetylglutamate kinase family. ArgB subfamily.

Its subcellular location is the cytoplasm. It catalyses the reaction N-acetyl-L-glutamate + ATP = N-acetyl-L-glutamyl 5-phosphate + ADP. It functions in the pathway amino-acid biosynthesis; L-arginine biosynthesis; N(2)-acetyl-L-ornithine from L-glutamate: step 2/4. Catalyzes the ATP-dependent phosphorylation of N-acetyl-L-glutamate. The chain is Acetylglutamate kinase from Neisseria meningitidis serogroup C / serotype 2a (strain ATCC 700532 / DSM 15464 / FAM18).